Here is a 224-residue protein sequence, read N- to C-terminus: UPF0758 protein Csal_2972 (224 aa).

The region spanning 102–224 (ALTSPTLVRR…VVSFAERGWL (123 aa)) is the MPN domain. Zn(2+) is bound by residues histidine 173, histidine 175, and aspartate 186. The JAMM motif signature appears at 173–186 (HNHPSGVAEPSDAD).

Belongs to the UPF0758 family.

This chain is UPF0758 protein Csal_2972, found in Chromohalobacter salexigens (strain ATCC BAA-138 / DSM 3043 / CIP 106854 / NCIMB 13768 / 1H11).